A 260-amino-acid polypeptide reads, in one-letter code: Imidazole glycerol phosphate synthase subunit HisF (260 aa).

Active-site residues include D12 and D131.

The protein belongs to the HisA/HisF family. Heterodimer of HisH and HisF.

Its subcellular location is the cytoplasm. The catalysed reaction is 5-[(5-phospho-1-deoxy-D-ribulos-1-ylimino)methylamino]-1-(5-phospho-beta-D-ribosyl)imidazole-4-carboxamide + L-glutamine = D-erythro-1-(imidazol-4-yl)glycerol 3-phosphate + 5-amino-1-(5-phospho-beta-D-ribosyl)imidazole-4-carboxamide + L-glutamate + H(+). It functions in the pathway amino-acid biosynthesis; L-histidine biosynthesis; L-histidine from 5-phospho-alpha-D-ribose 1-diphosphate: step 5/9. Functionally, IGPS catalyzes the conversion of PRFAR and glutamine to IGP, AICAR and glutamate. The HisF subunit catalyzes the cyclization activity that produces IGP and AICAR from PRFAR using the ammonia provided by the HisH subunit. The protein is Imidazole glycerol phosphate synthase subunit HisF of Corynebacterium jeikeium (strain K411).